The primary structure comprises 486 residues: Cytochrome P450 monooxygenase aclC (486 aa).

Heme is bound at residue Cys427.

This sequence belongs to the cytochrome P450 family. Heme serves as cofactor.

It functions in the pathway mycotoxin biosynthesis. Functionally, cytochrome P450 monooxygenase; part of the gene cluster that mediates the biosynthesis of aspirochlorine (or antibiotic A30641), an unusual halogenated spiro compound with distinctive antifungal properties due to selective inhibition of protein biosynthesis, and which is also active against bacteria, viruses, and murine tumor cells. The non-ribosomal peptide synthetase (NRPS) aclP is responsible the formation of the diketopiperazine (DKP) core from the condensation of 2 phenylalanine residues. One Phe residue is tailored into chlorotyrosine by hydroxylation and chlorination, whereas the second Phe undergoes an unprecedented C-C bond cleavage to be converted into glycine. After formation of the DKP, sulfur is incorporated into the DKP by conjugation with glutathione by aclG, followed by its stepwise degradation to the thiol by aclI, aclJ and aclK, and the dithiol oxidation by aclT. In addition, oxygenases (aclB, aclC, aclL and aclO) and O-methyltransferases (aclM and aclU) act as tailoring enzymes to produce the intermediate dechloroaspirochlorine. Ultimately, chlorination of dechloroaspirochlorine by the halogenase aclH is the last step in the aspirochlorine pathway. In Aspergillus oryzae (strain ATCC 42149 / RIB 40) (Yellow koji mold), this protein is Cytochrome P450 monooxygenase aclC.